Here is a 70-residue protein sequence, read N- to C-terminus: Small, acid-soluble spore protein 1 (70 aa).

The protein belongs to the alpha/beta-type SASP family.

Functionally, SASP are bound to spore DNA. They are double-stranded DNA-binding proteins that cause DNA to change to an a-like conformation. They protect the DNA backbone from chemical and enzymatic cleavage and are thus involved in dormant spore's high resistance to UV light. In Bacillus cereus, this protein is Small, acid-soluble spore protein 1 (sasP-1).